Consider the following 235-residue polypeptide: Type II secretion system protein N (235 aa).

Over 1–34 (MIPRRSSDITIKTRSDVLPFSGASSRWLQRYAPA) the chain is Cytoplasmic. Residues 35-55 (LLAVALIIAMSISLAWQAAGW) traverse the membrane as a helical; Signal-anchor for type II membrane protein segment. Residues 56–235 (LRLQRSPVAV…EPTTTPTESD (180 aa)) lie on the Periplasmic side of the membrane. The interval 205 to 235 (DALRQQMEATPIAEPAEEDSSEPTTTPTESD) is disordered. Low complexity predominate over residues 226-235 (EPTTTPTESD).

It localises to the cell inner membrane. In terms of biological role, involved in a type II secretion system (T2SS, formerly general secretion pathway, GSP) for the export of proteins. Required for the translocation of a variety of enzymes across the outer membrane. In Pseudomonas aeruginosa (strain ATCC 15692 / DSM 22644 / CIP 104116 / JCM 14847 / LMG 12228 / 1C / PRS 101 / PAO1), this protein is Type II secretion system protein N (xcpP).